Consider the following 118-residue polypeptide: Neutral phospholipase A2 homolog taipoxin beta chain 2 (118 aa).

Intrachain disulfides connect Cys11–Cys71, Cys27–Cys117, Cys29–Cys45, Cys44–Cys98, Cys51–Cys91, Cys60–Cys84, and Cys78–Cys89.

This sequence belongs to the phospholipase A2 family. Group I subfamily. D49 sub-subfamily. As to quaternary structure, heterotrimer of alpha, beta, and gamma chains; non-covalently linked. In terms of tissue distribution, expressed by the venom gland.

It localises to the secreted. Heterotrimer: Snake venom phospholipase A2 (PLA2) heterotrimer that acts as a potent presynaptic neurotoxin by blocking synaptic transmission and synaptic vesicle recycling. May act by binding in a calcium-dependent fashion to neurotonal pentraxin-1 (NPTX1) and neurotonal pentraxin-2 (NPTX2), but not to neuronal pentraxin receptor (NPTXR). Also binds to taipoxin-associated calcium binding protein 49 (RCN2), a protein localized in the lumen of endoplasmic reticulum. Functionally, monomer (beta chain): Snake venom phospholipase A2 homolog that is neither toxic nor enzymatically active. Does not bind calcium. This is Neutral phospholipase A2 homolog taipoxin beta chain 2 from Oxyuranus scutellatus scutellatus (Australian taipan).